A 197-amino-acid chain; its full sequence is MNFYTSSVGVRQYDHSLLVLNDLTNIHITCEDVHCSAKLLCYIYDVYKSRYPSIDEHSFLRMLKGPDDAEILSTFLRTIIWILSHDRDFPDEFRIPATALVSVYIKYYSDLKPRAPTTNCWTCRMSKNNLPFQVPSIKGFPAEAELYIVPISDHDGKTIEFSGMKTLYKSPSKKKHNYVISSDMPPLSARYTVWDGK.

The protein belongs to the tenuiviruses p3 protein family. In terms of assembly, homodimer.

The protein resides in the host cytoplasm. Acts as a suppressor of RNA-mediated gene silencing, also known as post-transcriptional gene silencing (PTGS), presumably through the binding of dsRNA. This is Suppressor of RNA silencing p3 from Rottboellia (Sorghum).